The primary structure comprises 311 residues: DNA-directed RNA polymerase subunit alpha (311 aa).

The tract at residues Met-1–Thr-228 is alpha N-terminal domain (alpha-NTD). The tract at residues Pro-239–Val-311 is alpha C-terminal domain (alpha-CTD).

Belongs to the RNA polymerase alpha chain family. In terms of assembly, in cyanobacteria the RNAP catalytic core is composed of 2 alpha, 1 beta, 1 beta', 1 gamma and 1 omega subunit. When a sigma factor is associated with the core the holoenzyme is formed, which can initiate transcription.

It carries out the reaction RNA(n) + a ribonucleoside 5'-triphosphate = RNA(n+1) + diphosphate. Functionally, DNA-dependent RNA polymerase catalyzes the transcription of DNA into RNA using the four ribonucleoside triphosphates as substrates. This Prochlorococcus marinus (strain MIT 9312) protein is DNA-directed RNA polymerase subunit alpha.